The following is a 453-amino-acid chain: Malate dehydrogenase [NADP], chloroplastic (453 aa).

Residues 1–68 constitute a chloroplast transit peptide; sequence MAVVKLSPWA…RLSSPASIRC (68 aa). The cysteines at positions 88 and 93 are disulfide-linked. Position 117–123 (117–123) interacts with NADP(+); the sequence is GAAGMIS. Substrate is bound by residues Arg-198 and Arg-204. NADP(+)-binding positions include Asn-211, Gln-218, and 235-237; that span reads VGN. Asn-237 and Arg-268 together coordinate substrate. The active-site Proton acceptor is the His-293. Cys-429 and Cys-441 are disulfide-bonded.

It belongs to the LDH/MDH superfamily. MDH type 2 family. As to quaternary structure, homodimer.

Its subcellular location is the plastid. It localises to the chloroplast. The enzyme catalyses (S)-malate + NADP(+) = oxaloacetate + NADPH + H(+). Its activity is regulated as follows. Chloroplast NADP-MDH is activated upon illumination. In order to be enzymatically active, disulfide bridges on the protein must be reduced by thioredoxin which receives electrons from ferredoxin and the electron transport system of photosynthesis. Functionally, the chloroplastic, NADP-dependent form is essential for the photosynthesis C4 cycle, which allows plants to circumvent the problem of photorespiration. In C4 plants, NADP-MDH activity acts to convert oxaloacetate to malate in chloroplasts of mesophyll cells for transport to the bundle sheath cells. The chain is Malate dehydrogenase [NADP], chloroplastic from Flaveria bidentis (Coastal plain yellowtops).